The chain runs to 342 residues: Holliday junction branch migration complex subunit RuvB (342 aa).

Residues 1 to 22 (MTLKPVREVSPGSQEGEERLEQ) are disordered. Positions 1 to 185 (MTLKPVREVS…FPIQERLGYY (185 aa)) are large ATPase domain (RuvB-L). ATP contacts are provided by residues Leu24, Arg25, Gly66, Lys69, Thr70, Ser71, 132-134 (EDY), Arg175, Tyr185, and Arg222. Mg(2+) is bound at residue Thr70. A small ATPAse domain (RuvB-S) region spans residues 186 to 256 (EPTELREIAV…IVETTLERLE (71 aa)). Positions 259–342 (GRGLDAMDRR…RPQGKQGSLI (84 aa)) are head domain (RuvB-H). DNA is bound by residues Arg295, Arg314, and Arg319.

It belongs to the RuvB family. As to quaternary structure, homohexamer. Forms an RuvA(8)-RuvB(12)-Holliday junction (HJ) complex. HJ DNA is sandwiched between 2 RuvA tetramers; dsDNA enters through RuvA and exits via RuvB. An RuvB hexamer assembles on each DNA strand where it exits the tetramer. Each RuvB hexamer is contacted by two RuvA subunits (via domain III) on 2 adjacent RuvB subunits; this complex drives branch migration. In the full resolvosome a probable DNA-RuvA(4)-RuvB(12)-RuvC(2) complex forms which resolves the HJ.

The protein resides in the cytoplasm. The enzyme catalyses ATP + H2O = ADP + phosphate + H(+). In terms of biological role, the RuvA-RuvB-RuvC complex processes Holliday junction (HJ) DNA during genetic recombination and DNA repair, while the RuvA-RuvB complex plays an important role in the rescue of blocked DNA replication forks via replication fork reversal (RFR). RuvA specifically binds to HJ cruciform DNA, conferring on it an open structure. The RuvB hexamer acts as an ATP-dependent pump, pulling dsDNA into and through the RuvAB complex. RuvB forms 2 homohexamers on either side of HJ DNA bound by 1 or 2 RuvA tetramers; 4 subunits per hexamer contact DNA at a time. Coordinated motions by a converter formed by DNA-disengaged RuvB subunits stimulates ATP hydrolysis and nucleotide exchange. Immobilization of the converter enables RuvB to convert the ATP-contained energy into a lever motion, pulling 2 nucleotides of DNA out of the RuvA tetramer per ATP hydrolyzed, thus driving DNA branch migration. The RuvB motors rotate together with the DNA substrate, which together with the progressing nucleotide cycle form the mechanistic basis for DNA recombination by continuous HJ branch migration. Branch migration allows RuvC to scan DNA until it finds its consensus sequence, where it cleaves and resolves cruciform DNA. This Anaeromyxobacter sp. (strain Fw109-5) protein is Holliday junction branch migration complex subunit RuvB.